The sequence spans 348 residues: Holliday junction branch migration complex subunit RuvB (348 aa).

Positions 4–184 (ADRLIAASGR…FGIVQRLEFY (181 aa)) are large ATPase domain (RuvB-L). ATP is bound by residues Ile-23, Arg-24, Gly-65, Lys-68, Thr-69, Thr-70, 131 to 133 (EDF), Arg-174, Tyr-184, and Arg-221. Thr-69 lines the Mg(2+) pocket. Residues 185-255 (SDKDLATIVS…VADLALNLLD (71 aa)) are small ATPAse domain (RuvB-S). Positions 258 to 348 (ERGFDHSDRR…GADFSEAGDE (91 aa)) are head domain (RuvB-H). The DNA site is built by Arg-294, Arg-313, and Arg-318.

This sequence belongs to the RuvB family. Homohexamer. Forms an RuvA(8)-RuvB(12)-Holliday junction (HJ) complex. HJ DNA is sandwiched between 2 RuvA tetramers; dsDNA enters through RuvA and exits via RuvB. An RuvB hexamer assembles on each DNA strand where it exits the tetramer. Each RuvB hexamer is contacted by two RuvA subunits (via domain III) on 2 adjacent RuvB subunits; this complex drives branch migration. In the full resolvosome a probable DNA-RuvA(4)-RuvB(12)-RuvC(2) complex forms which resolves the HJ.

The protein localises to the cytoplasm. It catalyses the reaction ATP + H2O = ADP + phosphate + H(+). Functionally, the RuvA-RuvB-RuvC complex processes Holliday junction (HJ) DNA during genetic recombination and DNA repair, while the RuvA-RuvB complex plays an important role in the rescue of blocked DNA replication forks via replication fork reversal (RFR). RuvA specifically binds to HJ cruciform DNA, conferring on it an open structure. The RuvB hexamer acts as an ATP-dependent pump, pulling dsDNA into and through the RuvAB complex. RuvB forms 2 homohexamers on either side of HJ DNA bound by 1 or 2 RuvA tetramers; 4 subunits per hexamer contact DNA at a time. Coordinated motions by a converter formed by DNA-disengaged RuvB subunits stimulates ATP hydrolysis and nucleotide exchange. Immobilization of the converter enables RuvB to convert the ATP-contained energy into a lever motion, pulling 2 nucleotides of DNA out of the RuvA tetramer per ATP hydrolyzed, thus driving DNA branch migration. The RuvB motors rotate together with the DNA substrate, which together with the progressing nucleotide cycle form the mechanistic basis for DNA recombination by continuous HJ branch migration. Branch migration allows RuvC to scan DNA until it finds its consensus sequence, where it cleaves and resolves cruciform DNA. This Pseudomonas putida (strain W619) protein is Holliday junction branch migration complex subunit RuvB.